The primary structure comprises 109 residues: Defensin-B5 (109 aa).

The N-terminal stretch at 1-20 (MRGLLPFLFLLSFFLSPIQA) is a signal peptide. The disordered stretch occupies residues 21–44 (QPEGREEELEETWSEDRDQAPPRV). Positions 21–70 (QPEGREEELEETWSEDRDQAPPRVVEESEVVGAENEAGLAAGRSYPWIIL) are excised as a propeptide. Residues 34 to 44 (SEDRDQAPPRV) are compositionally biased toward basic and acidic residues. 3 cysteine pairs are disulfide-bonded: C73/C101, C80/C95, and C85/C102. The propeptide occupies 107-109 (AVP).

This sequence belongs to the beta-defensin family. As to expression, highly expressed in kidney, and expressed at lower levels in testis.

Its subcellular location is the secreted. Its function is as follows. Has antimicrobial activity. This is Defensin-B5 from Ornithorhynchus anatinus (Duckbill platypus).